We begin with the raw amino-acid sequence, 273 residues long: MSASPRIGVLGAGGRMGRILIQAVQQAGYQLAAAVERPESSLVGSDAGELAGIGHIGVKISGSLVEVLKDCDVVIDFTAPVATEQHLKLCGDAGVAMVIGTTGFSEQQKQLLNETAHQTPVVYAANYSVGVNVTIKLLELASKVFGDSVDIEIIEAHHRHKVDAPSGTALMMGEAIAETLGRDLKQDAVYCREGHTGPRERQSIGFQTIRGGDIVGEHTAMFIGEGERVEITHKATNRMNFAAGAVRAAAWVVGREARKYDMKDVLGFNDIQV.

NAD(+) is bound by residues 11–16 (GAGGRM) and Glu-36. Arg-37 is a binding site for NADP(+). Residues 100 to 102 (GTT) and 124 to 127 (AANY) each bind NAD(+). The active-site Proton donor/acceptor is His-157. Residue His-158 participates in (S)-2,3,4,5-tetrahydrodipicolinate binding. The active-site Proton donor is the Lys-161. 167–168 (GT) lines the (S)-2,3,4,5-tetrahydrodipicolinate pocket.

It belongs to the DapB family.

The protein resides in the cytoplasm. It catalyses the reaction (S)-2,3,4,5-tetrahydrodipicolinate + NAD(+) + H2O = (2S,4S)-4-hydroxy-2,3,4,5-tetrahydrodipicolinate + NADH + H(+). The enzyme catalyses (S)-2,3,4,5-tetrahydrodipicolinate + NADP(+) + H2O = (2S,4S)-4-hydroxy-2,3,4,5-tetrahydrodipicolinate + NADPH + H(+). It participates in amino-acid biosynthesis; L-lysine biosynthesis via DAP pathway; (S)-tetrahydrodipicolinate from L-aspartate: step 4/4. Its function is as follows. Catalyzes the conversion of 4-hydroxy-tetrahydrodipicolinate (HTPA) to tetrahydrodipicolinate. This Acinetobacter baylyi (strain ATCC 33305 / BD413 / ADP1) protein is 4-hydroxy-tetrahydrodipicolinate reductase.